Consider the following 730-residue polypeptide: ABC transporter G family member 20 (730 aa).

The ABC transporter domain maps to 15 to 244 (ISLKNVCRGY…YESQTLEEVF (230 aa)). 47 to 54 (GASGSGKT) serves as a coordination point for ATP. A disordered region spans residues 281–303 (VNNNNNNNNNNNNNNYNNNDDEE). Residues 282–298 (NNNNNNNNNNNNNNYNN) are compositionally biased toward low complexity. The region spanning 489 to 717 (SFETLAKQQA…FIAVLALNEK (229 aa)) is the ABC transmembrane type-2 domain. The next 5 membrane-spanning stretches (helical) occupy residues 520–540 (FIDF…AISI), 572–592 (FLGH…IAIY), 602–622 (IALV…LGLV), 634–654 (IQLS…LWPL), and 692–712 (VWVA…IAVL).

This sequence belongs to the ABC transporter superfamily.

The protein resides in the membrane. This is ABC transporter G family member 20 (abcG20) from Dictyostelium discoideum (Social amoeba).